We begin with the raw amino-acid sequence, 123 residues long: Small ribosomal subunit protein uS12 (123 aa).

Residues 1-31 (MPTINQLIRKPREAQKARDKAPALQASPQKR) form a disordered region. Basic and acidic residues predominate over residues 10–21 (KPREAQKARDKA). Asp-89 carries the post-translational modification 3-methylthioaspartic acid.

This sequence belongs to the universal ribosomal protein uS12 family. Part of the 30S ribosomal subunit. Contacts proteins S8 and S17. May interact with IF1 in the 30S initiation complex.

With S4 and S5 plays an important role in translational accuracy. In terms of biological role, interacts with and stabilizes bases of the 16S rRNA that are involved in tRNA selection in the A site and with the mRNA backbone. Located at the interface of the 30S and 50S subunits, it traverses the body of the 30S subunit contacting proteins on the other side and probably holding the rRNA structure together. The combined cluster of proteins S8, S12 and S17 appears to hold together the shoulder and platform of the 30S subunit. The sequence is that of Small ribosomal subunit protein uS12 from Xanthobacter autotrophicus (strain ATCC BAA-1158 / Py2).